Here is an 860-residue protein sequence, read N- to C-terminus: MSRFFYGNDSDSDSSGSDEEELYSDEEVEQSEEESSEEDASSEEESSEDEDAGKAGASRFMKDVSDSEESEEEDVVKVVKSAKNKRLEELESTIKLIDNAQKINDWAVISSEFDKMNRQVVKVLQSGPVPKIYVKTVADLEDFVNETVAKQKSSNKKMNASNAKGFNAIKQKIKKNNKEYAAQIEKYRADKDSYMESDEEEEKKPAIAAPRLSKLERVEAPVAVAGDDDGFETVVRGKTLQYTPESILKHLRVIVESRGKKNTDRLEQIKTMEKLLEVAQTPYQRIRVYLTLISTRFDLSTTSTAAYMSVEQWKAAEQELSTLLSVLEKERNYVVSEGAEEWEDDEKQPQVAAGETFYIPGSIVSYVERLDDELTRSLQHIDPHTAEYIERLSDEKQLYTNLVRTQIYVEGLTKLEKTELRQDSLNRVVMRRLEHIYFKPSQVITILEEGTDKALPSELETSITTRGNSDAQTLVQTLCNYLFRNSDGILRARAMLAQIYFLALHDQYYRARDLMLMSHLSENIANFDVSSQILFNRTLVQIGLCAFRAGLIYEAQNTLSEICGSGRQKELLAQGIILQRYSTVSPEQERLERQRQLPFHMHINLELLECIYLTSSMFLEVPLMAQTSSSPEMKRRVISKTFRRMLDYNERQVFTGPAENTRDGVIMSAKFLAAGDWKKAAEMLNSIKIWDLMPQPEKIKEMLSQQIQEEGLRTYLFTYAPFYDSLSISTLSTMFELSEKKIAAIISRMISHEELGAALDQVNDAIVFRKGVELSRLQSQIVTLADKSMNLLEANEKTLEQRTQGMANAFQRDQGAGARGGRGPRGGGQARGGPRLPGGQQRRPGGQQFGGGALGGAIKA.

A disordered region spans residues 1-76 (MSRFFYGNDS…SEESEEEDVV (76 aa)). Positions 10–51 (SDSDSSGSDEEELYSDEEVEQSEEESSEEDASSEEESSEDED) are enriched in acidic residues. Positions 599–773 (FHMHINLELL…DAIVFRKGVE (175 aa)) constitute a PCI domain. The disordered stretch occupies residues 812 to 860 (RDQGAGARGGRGPRGGGQARGGPRLPGGQQRRPGGQQFGGGALGGAIKA). The span at 817–831 (GARGGRGPRGGGQAR) shows a compositional bias: gly residues. Over residues 832 to 846 (GGPRLPGGQQRRPGG) the composition is skewed to low complexity. Residues 847-860 (QQFGGGALGGAIKA) show a composition bias toward gly residues.

This sequence belongs to the eIF-3 subunit C family. As to quaternary structure, component of the eukaryotic translation initiation factor 3 (eIF-3) complex.

The protein resides in the cytoplasm. Component of the eukaryotic translation initiation factor 3 (eIF-3) complex, which is involved in protein synthesis of a specialized repertoire of mRNAs and, together with other initiation factors, stimulates binding of mRNA and methionyl-tRNAi to the 40S ribosome. The eIF-3 complex specifically targets and initiates translation of a subset of mRNAs involved in cell proliferation. This chain is Eukaryotic translation initiation factor 3 subunit C (nip1), found in Emericella nidulans (strain FGSC A4 / ATCC 38163 / CBS 112.46 / NRRL 194 / M139) (Aspergillus nidulans).